The sequence spans 74 residues: Small ribosomal subunit protein bS20c (74 aa).

Belongs to the bacterial ribosomal protein bS20 family.

The protein resides in the plastid. It is found in the chloroplast. Binds directly to 16S ribosomal RNA. This chain is Small ribosomal subunit protein bS20c, found in Cyanidioschyzon merolae (strain NIES-3377 / 10D) (Unicellular red alga).